A 204-amino-acid polypeptide reads, in one-letter code: uncharacterized protein (204 aa).

The first 17 residues, 1–17 (MKRLVTGLLALSLFLAA), serve as a signal peptide directing secretion. The disordered stretch occupies residues 17–100 (ACGQDSDQQK…NNNQANNNQK (84 aa)). Cys-18 is lipidated: N-palmitoyl cysteine. A lipid anchor (S-diacylglycerol cysteine) is attached at Cys-18. A compositionally biased stretch (basic and acidic residues) spans 23–70 (DQQKDGNKEKDDKAKTEQQDKKTNDSSKDKKDNKDDSKDVNKDNKDNS). A compositionally biased stretch (low complexity) spans 71–100 (ANDNQQQSNSNATNNDQNQTNNNQANNNQK).

The protein resides in the cell membrane. This is an uncharacterized protein from Staphylococcus aureus (strain MSSA476).